Consider the following 124-residue polypeptide: Large ribosomal subunit protein bL17 (124 aa).

It belongs to the bacterial ribosomal protein bL17 family. As to quaternary structure, part of the 50S ribosomal subunit. Contacts protein L32.

The polypeptide is Large ribosomal subunit protein bL17 (Trichlorobacter lovleyi (strain ATCC BAA-1151 / DSM 17278 / SZ) (Geobacter lovleyi)).